Consider the following 161-residue polypeptide: SsrA-binding protein (161 aa).

The segment at 1 to 23 (MATKKNEQIKGRTDGLVAENRRS) is disordered.

The protein belongs to the SmpB family.

The protein localises to the cytoplasm. Required for rescue of stalled ribosomes mediated by trans-translation. Binds to transfer-messenger RNA (tmRNA), required for stable association of tmRNA with ribosomes. tmRNA and SmpB together mimic tRNA shape, replacing the anticodon stem-loop with SmpB. tmRNA is encoded by the ssrA gene; the 2 termini fold to resemble tRNA(Ala) and it encodes a 'tag peptide', a short internal open reading frame. During trans-translation Ala-aminoacylated tmRNA acts like a tRNA, entering the A-site of stalled ribosomes, displacing the stalled mRNA. The ribosome then switches to translate the ORF on the tmRNA; the nascent peptide is terminated with the 'tag peptide' encoded by the tmRNA and targeted for degradation. The ribosome is freed to recommence translation, which seems to be the essential function of trans-translation. This chain is SsrA-binding protein, found in Hyphomonas neptunium (strain ATCC 15444).